The chain runs to 354 residues: CREB/ATF bZIP transcription factor (354 aa).

Disordered stretches follow at residues 1-95, 113-156, and 171-214; these read MRHS…PGEE, PRQP…AAEM, and GGCS…RKAA. S50 carries the post-translational modification Phosphoserine. The segment covering 121–132 has biased composition (low complexity); the sequence is DPGLSSPGPLSS. Gly residues-rich tracts occupy residues 133-143 and 190-199; these read SGGGSDSGGLW and PGGGGGGGSG. The region spanning 204–267 is the bZIP domain; that stretch reads QAATKSPRKA…QALQEESRYL (64 aa). A compositionally biased stretch (low complexity) spans 205-214; the sequence is AATKSPRKAA. The segment at 219–226 is basic motif; that stretch reads RLNRLKKK. Positions 232–267 are leucine-zipper; sequence LESRVRGLAAENQELRAENRELGKRVQALQEESRYL. The short motif at 303–306 is the HCFC1-binding motif (HBM) element; that stretch reads DHDY.

The protein belongs to the bZIP family. ATF subfamily. In terms of assembly, interacts with HCFC1; the interaction inhibits CREB3 transcriptional activity. Interacts with CREB3; the interaction occurs only in combination with HCFC1. In adults, expressed most abundantly in heart, liver and skeletal muscle, moderately abundant in kidney and pancreas, and barely detectable in lung. In fetal tissues, expressed most abundantly in kidney and very low amounts in heart, lung and liver.

Its subcellular location is the nucleus. Functionally, strongly activates transcription when bound to HCFC1. Suppresses the expression of HSV proteins in cells infected with the virus in a HCFC1-dependent manner. Also suppresses the HCFC1-dependent transcriptional activation by CREB3 and reduces the amount of CREB3 in the cell. Able to down-regulate expression of some cellular genes in CREBZF-expressing cells. This chain is CREB/ATF bZIP transcription factor (CREBZF), found in Homo sapiens (Human).